Consider the following 297-residue polypeptide: Protein BCCIP homolog (297 aa).

The segment at 1–40 (MSANKQKKLSTMEVDPNEDVSSSSEDDDDDEPHPDAYKGN) is disordered.

Belongs to the BCP1 family.

The polypeptide is Protein BCCIP homolog (Drosophila melanogaster (Fruit fly)).